Consider the following 404-residue polypeptide: Ubiquitin-like modifier-activating enzyme 5 (404 aa).

5 residues coordinate ATP: Gly-83, Asp-104, Lys-127, Asn-150, and Asn-184. The Zn(2+) site is built by Cys-226 and Cys-229. Catalysis depends on Cys-250, which acts as the Glycyl thioester intermediate. 2 residues coordinate Zn(2+): Cys-303 and Cys-308. Residues Ala-372–Ser-393 form a disordered region. Low complexity predominate over residues Glu-382–Glu-391.

The protein belongs to the ubiquitin-activating E1 family. UBA5 subfamily.

Functionally, E1-like enzyme which activates UFM1. This chain is Ubiquitin-like modifier-activating enzyme 5, found in Drosophila sechellia (Fruit fly).